Consider the following 704-residue polypeptide: Elongation factor G (704 aa).

The 283-residue stretch at 8 to 290 (EKYRNIGICA…GVVRYLPAPN (283 aa)) folds into the tr-type G domain. GTP contacts are provided by residues 17–24 (AHVDAGKT), 88–92 (DTPGH), and 142–145 (NKMD).

It belongs to the TRAFAC class translation factor GTPase superfamily. Classic translation factor GTPase family. EF-G/EF-2 subfamily.

It localises to the cytoplasm. Functionally, catalyzes the GTP-dependent ribosomal translocation step during translation elongation. During this step, the ribosome changes from the pre-translocational (PRE) to the post-translocational (POST) state as the newly formed A-site-bound peptidyl-tRNA and P-site-bound deacylated tRNA move to the P and E sites, respectively. Catalyzes the coordinated movement of the two tRNA molecules, the mRNA and conformational changes in the ribosome. This chain is Elongation factor G, found in Francisella tularensis subsp. tularensis (strain FSC 198).